Here is a 239-residue protein sequence, read N- to C-terminus: Ribonuclease 3 (239 aa).

The RNase III domain maps to histidine 11–aspartate 133. Residue glutamate 46 participates in Mg(2+) binding. Residue aspartate 50 is part of the active site. Residues aspartate 119 and glutamate 122 each coordinate Mg(2+). In terms of domain architecture, DRBM spans aspartate 160–glutamate 230.

Belongs to the ribonuclease III family. As to quaternary structure, homodimer. Mg(2+) serves as cofactor.

Its subcellular location is the cytoplasm. It carries out the reaction Endonucleolytic cleavage to 5'-phosphomonoester.. Its function is as follows. Digests double-stranded RNA. Involved in the processing of primary rRNA transcript to yield the immediate precursors to the large and small rRNAs (23S and 16S). Also processes some mRNAs, and tRNAs when they are encoded in the rRNA operon. CRISPR (clustered regularly interspaced short palindromic repeat) is an adaptive immune system that provides protection against mobile genetic elements (viruses, transposable elements and conjugative plasmids). CRISPR clusters contain spacers, sequences complementary to antecedent mobile elements, and target invading nucleic acids. CRISPR clusters are transcribed and processed into CRISPR RNA (crRNA). In this organism endogenous ribonuclease 3 and Cas9 are required for correct coprocessing of pre-crRNA and the trans-encoded small RNA (tracrRNA). Cas9, crRNA and tracRNA are required for cleavage of invading DNA. Involved in 3'-end processing but not 5'-end processing of crRNA and tracrRNA. This is Ribonuclease 3 from Neisseria meningitidis serogroup C (strain 8013).